A 245-amino-acid chain; its full sequence is MRHDGRQHDELRPITFDLDFISHPEGSVLITAGNTKVICNASVEDRVPPFLRGGGKGWITAEYSMLPRATNQRTIRESSKGKISGRTMEIQRLIGRALRAVVDLEKLGERTIWIDCDVIQADGGTRTASITGAFLAMAIAIGKLIKAGTIKTNPITDFLAAISVGIDKEQGILLDLNYEEDSSAEVDMNVIMTGSGRFVELQGTGEEATFSREDLNGLLGLAEKGIQELIDKQKEVLGDSLPELK.

Phosphate contacts are provided by residues R86 and 124–126; that span reads GTR.

This sequence belongs to the RNase PH family. As to quaternary structure, homohexameric ring arranged as a trimer of dimers. It has been suggested that the active form is the dimer which binds tRNA and that the hexameric form protects the substrate recognition loop (approximately residues 65-82) from proteolysis.

It catalyses the reaction tRNA(n+1) + phosphate = tRNA(n) + a ribonucleoside 5'-diphosphate. Its function is as follows. Phosphorolytic 3'-5' exoribonuclease that plays an important role in tRNA 3'-end maturation. Removes nucleotide residues following the 3'-CCA terminus of tRNAs; can also add nucleotides to the ends of RNA molecules by using nucleoside diphosphates as substrates, but this may not be physiologically important. Probably plays a role in initiation of 16S rRNA degradation (leading to ribosome degradation) during starvation. Plays a role in the secondary pathway of 23S rRNA 3' end maturation. The chain is Ribonuclease PH from Bacillus subtilis (strain 168).